The chain runs to 100 residues: Large ribosomal subunit protein bL21 (100 aa).

Belongs to the bacterial ribosomal protein bL21 family. Part of the 50S ribosomal subunit. Contacts protein L20.

Functionally, this protein binds to 23S rRNA in the presence of protein L20. The polypeptide is Large ribosomal subunit protein bL21 (Mycoplasmopsis synoviae (strain 53) (Mycoplasma synoviae)).